The sequence spans 564 residues: Eukaryotic translation initiation factor 3 subunit L (564 aa).

Residues 331-537 form the PCI domain; it reads DAIRVFANIL…IHIADTKVAR (207 aa).

The protein belongs to the eIF-3 subunit L family. Component of the eukaryotic translation initiation factor 3 (eIF-3) complex, which is composed of 13 subunits: EIF3A, EIF3B, EIF3C, EIF3D, EIF3E, EIF3F, EIF3G, EIF3H, EIF3I, EIF3J, EIF3K, EIF3L and EIF3M.

The protein resides in the cytoplasm. In terms of biological role, component of the eukaryotic translation initiation factor 3 (eIF-3) complex, which is involved in protein synthesis of a specialized repertoire of mRNAs and, together with other initiation factors, stimulates binding of mRNA and methionyl-tRNAi to the 40S ribosome. The eIF-3 complex specifically targets and initiates translation of a subset of mRNAs involved in cell proliferation. In Gallus gallus (Chicken), this protein is Eukaryotic translation initiation factor 3 subunit L.